The sequence spans 80 residues: MPPRWASLLLLACSLLLLAVPPGTAGPSQPTYPGDDAPVEDLIRFYNDLQQYLNVVTRHRYGRRSSSRVLCEEPMGAAGC.

Residues 1 to 25 (MPPRWASLLLLACSLLLLAVPPGTA) form the signal peptide. Tyr-61 is subject to Tyrosine amide. The propeptide occupies 65 to 80 (SSSRVLCEEPMGAAGC).

This sequence belongs to the NPY family.

The protein resides in the secreted. Functionally, hormone secreted by pancreatic cells that acts as a regulator of pancreatic and gastrointestinal functions. This is Pancreatic polypeptide (PPY) from Gallus gallus (Chicken).